The following is a 66-amino-acid chain: Large ribosomal subunit protein uL29 (66 aa).

This sequence belongs to the universal ribosomal protein uL29 family. As to quaternary structure, part of the 50S ribosomal subunit.

This Bacillus subtilis (strain 168) protein is Large ribosomal subunit protein uL29 (rpmC).